The sequence spans 1342 residues: DNA-directed RNA polymerase subunit beta (1342 aa).

The protein belongs to the RNA polymerase beta chain family. The RNAP catalytic core consists of 2 alpha, 1 beta, 1 beta' and 1 omega subunit. When a sigma factor is associated with the core the holoenzyme is formed, which can initiate transcription.

The enzyme catalyses RNA(n) + a ribonucleoside 5'-triphosphate = RNA(n+1) + diphosphate. Functionally, DNA-dependent RNA polymerase catalyzes the transcription of DNA into RNA using the four ribonucleoside triphosphates as substrates. The chain is DNA-directed RNA polymerase subunit beta from Salmonella choleraesuis (strain SC-B67).